A 291-amino-acid polypeptide reads, in one-letter code: 4-hydroxy-tetrahydrodipicolinate synthase (291 aa).

Thr-45 serves as a coordination point for pyruvate. Tyr-133 serves as the catalytic Proton donor/acceptor. The active-site Schiff-base intermediate with substrate is Lys-161. Ile-203 is a binding site for pyruvate.

It belongs to the DapA family. In terms of assembly, homotetramer; dimer of dimers.

The protein localises to the cytoplasm. It catalyses the reaction L-aspartate 4-semialdehyde + pyruvate = (2S,4S)-4-hydroxy-2,3,4,5-tetrahydrodipicolinate + H2O + H(+). Its pathway is amino-acid biosynthesis; L-lysine biosynthesis via DAP pathway; (S)-tetrahydrodipicolinate from L-aspartate: step 3/4. Its function is as follows. Catalyzes the condensation of (S)-aspartate-beta-semialdehyde [(S)-ASA] and pyruvate to 4-hydroxy-tetrahydrodipicolinate (HTPA). The polypeptide is 4-hydroxy-tetrahydrodipicolinate synthase (Saccharophagus degradans (strain 2-40 / ATCC 43961 / DSM 17024)).